An 86-amino-acid chain; its full sequence is U18-theraphotoxin-Cg1a (86 aa).

Residues 1–20 (KASVLITLAVLGVMFVWTSA) form the signal peptide. A propeptide spanning residues 21 to 49 (AELEERGSDQRDSPALIKSMAKVFQSEER) is cleaved from the precursor. Disulfide bonds link cysteine 51–cysteine 65, cysteine 58–cysteine 70, and cysteine 64–cysteine 78. Position 84 is a phenylalanine amide (phenylalanine 84).

It belongs to the neurotoxin 10 (Hwtx-1) family. 47 subfamily. As to expression, expressed by the venom gland.

The protein localises to the secreted. In terms of biological role, inhibits TTX-sensitive and TTX-insensitive sodium currents (IC(50) is 0.6 uM and 0.95 uM respectively) on rat dorsal root ganglion (DRG) neurons. Inhibits muscular subtypes sodium channels Nav1.4/SCN4A and Nav1.5/SCN5A transiently transfected in to HEK293 cells (IC(50) is 5.42 uM and 0.45 uM respectively). Also blocks Kv2.1/KCNB1 potassium channels expressed in X.laevis oocytes with an IC(50) of 604 nM. Injection of the toxin in mice was immediately followed by general ataxia, lack of response to stimuli and semiparalysis. The protein is U18-theraphotoxin-Cg1a of Chilobrachys guangxiensis (Chinese earth tiger tarantula).